The chain runs to 63 residues: MKASELTQKSVEELNAELLGLLREQFNLRMQHATGQLTQTHQLKIVRRNIARVKTIITSKAGA.

Belongs to the universal ribosomal protein uL29 family.

The polypeptide is Large ribosomal subunit protein uL29 (Shewanella loihica (strain ATCC BAA-1088 / PV-4)).